We begin with the raw amino-acid sequence, 128 residues long: Fatty acid binding protein 1-B.1 (128 aa).

The protein belongs to the calycin superfamily. Fatty-acid binding protein (FABP) family. Expressed in the yolk syncytial layer (YSL) and subsequently in the intestinal bulb in developing embryos and larvae. In adults, expressed in the intestine.

It is found in the cytoplasm. In terms of biological role, binds free fatty acids and their coenzyme A derivatives, bilirubin, and some other small molecules in the cytoplasm. May be involved in intracellular lipid transport. The chain is Fatty acid binding protein 1-B.1 (fabp1b.1) from Danio rerio (Zebrafish).